The chain runs to 389 residues: Formate-dependent phosphoribosylglycinamide formyltransferase (389 aa).

Residues 12-13 (EL) and Glu-72 each bind N(1)-(5-phospho-beta-D-ribosyl)glycinamide. ATP is bound by residues Arg-104, Lys-145, 150-155 (SSGKGQ), 185-188 (EEFI), and Glu-193. Residues 109-301 (DLAAKELGLK…EFELHLRAVL (193 aa)) form the ATP-grasp domain. Residues Glu-258 and Glu-271 each coordinate Mg(2+). Residues Asp-278, Lys-350, and 357 to 358 (RR) each bind N(1)-(5-phospho-beta-D-ribosyl)glycinamide.

Belongs to the PurK/PurT family. In terms of assembly, homodimer.

The enzyme catalyses N(1)-(5-phospho-beta-D-ribosyl)glycinamide + formate + ATP = N(2)-formyl-N(1)-(5-phospho-beta-D-ribosyl)glycinamide + ADP + phosphate + H(+). Its pathway is purine metabolism; IMP biosynthesis via de novo pathway; N(2)-formyl-N(1)-(5-phospho-D-ribosyl)glycinamide from N(1)-(5-phospho-D-ribosyl)glycinamide (formate route): step 1/1. In terms of biological role, involved in the de novo purine biosynthesis. Catalyzes the transfer of formate to 5-phospho-ribosyl-glycinamide (GAR), producing 5-phospho-ribosyl-N-formylglycinamide (FGAR). Formate is provided by PurU via hydrolysis of 10-formyl-tetrahydrofolate. The polypeptide is Formate-dependent phosphoribosylglycinamide formyltransferase (Phocaeicola vulgatus (strain ATCC 8482 / DSM 1447 / JCM 5826 / CCUG 4940 / NBRC 14291 / NCTC 11154) (Bacteroides vulgatus)).